Consider the following 293-residue polypeptide: Kynurenine formamidase (293 aa).

The HGGXW motif lies at 84–88 (HGGYW). S153 serves as the catalytic Nucleophile. Residues D236 and H268 contribute to the active site.

This sequence belongs to the kynurenine formamidase family. In terms of assembly, homodimer.

The protein resides in the cytoplasm. It is found in the cytosol. It localises to the nucleus. It catalyses the reaction N-formyl-L-kynurenine + H2O = L-kynurenine + formate + H(+). It functions in the pathway amino-acid degradation; L-tryptophan degradation via kynurenine pathway; L-kynurenine from L-tryptophan: step 2/2. Its function is as follows. Catalyzes the hydrolysis of N-formyl-L-kynurenine to L-kynurenine, the second step in the kynurenine pathway of tryptophan degradation. Kynurenine may be further oxidized to nicotinic acid, NAD(H) and NADP(H). Required for elimination of toxic metabolites. In Danio rerio (Zebrafish), this protein is Kynurenine formamidase (afmid).